The primary structure comprises 124 residues: Holo-[acyl-carrier-protein] synthase (124 aa).

Positions 8 and 56 each coordinate Mg(2+).

It belongs to the P-Pant transferase superfamily. AcpS family. The cofactor is Mg(2+).

Its subcellular location is the cytoplasm. The enzyme catalyses apo-[ACP] + CoA = holo-[ACP] + adenosine 3',5'-bisphosphate + H(+). Functionally, transfers the 4'-phosphopantetheine moiety from coenzyme A to a Ser of acyl-carrier-protein. The sequence is that of Holo-[acyl-carrier-protein] synthase from Clostridium acetobutylicum (strain ATCC 824 / DSM 792 / JCM 1419 / IAM 19013 / LMG 5710 / NBRC 13948 / NRRL B-527 / VKM B-1787 / 2291 / W).